Consider the following 327-residue polypeptide: Flap endonuclease 1 (327 aa).

The N-domain stretch occupies residues 1-98; the sequence is MGVKLKDIIQ…ETIDQRRQTR (98 aa). Positions 27, 80, 152, 154, 173, 175, and 226 each coordinate Mg(2+). The interval 116 to 246 is I-domain; it reads EARKYAMRSS…KTALKLAKKG (131 aa). Residues 319-327 form an interaction with PCNA region; sequence SQKSLEDWF.

It belongs to the XPG/RAD2 endonuclease family. FEN1 subfamily. Interacts with PCNA. PCNA stimulates the nuclease activity without altering cleavage specificity. Mg(2+) serves as cofactor.

In terms of biological role, structure-specific nuclease with 5'-flap endonuclease and 5'-3' exonuclease activities involved in DNA replication and repair. During DNA replication, cleaves the 5'-overhanging flap structure that is generated by displacement synthesis when DNA polymerase encounters the 5'-end of a downstream Okazaki fragment. Binds the unpaired 3'-DNA end and kinks the DNA to facilitate 5' cleavage specificity. Cleaves one nucleotide into the double-stranded DNA from the junction in flap DNA, leaving a nick for ligation. Also involved in the base excision repair (BER) pathway. Acts as a genome stabilization factor that prevents flaps from equilibrating into structures that lead to duplications and deletions. Also possesses 5'-3' exonuclease activity on nicked or gapped double-stranded DNA. This Methanobrevibacter smithii (strain ATCC 35061 / DSM 861 / OCM 144 / PS) protein is Flap endonuclease 1.